The primary structure comprises 320 residues: uncharacterized protein (320 aa).

Interacts with VP1054, VP39 and VP80.

It localises to the virion. It is found in the host nucleus. The protein resides in the host cytoplasm. In terms of biological role, plays a role in nucleocapsid assembly and is essential for viral replication. Distributed over the cylindrical capsid sheath of nucleocapsid. This is an uncharacterized protein from Lepidoptera (butterflies and moths).